Consider the following 357-residue polypeptide: Transcription factor unc-86 (357 aa).

The POU-IV box motif lies at 35–44 (RAAQVALADI). A POU-specific domain is found at 155-232 (DMDTDPRQLE…ILHSWLEKAE (78 aa)). The homeobox DNA-binding region spans 253 to 312 (KKRKRTSIAAPEKRELEQFFKQQPRPSGERIASIADRLDLKKNVVRVWFCNQRQKQKRDF).

This sequence belongs to the POU transcription factor family. Class-4 subfamily. As to quaternary structure, interacts with mec-3; the heterooligomer binds to the promoters of mec-3, mec-4 and mec-7. Specific to neurons and neuroblasts. Expressed in CEM head neurons and in IL2, URA, URB, URX and URY neurons. Not expressed in olfactory sensory neurons but expressed in AIZ interneurons.

Its subcellular location is the nucleus. Transcription factor required for correct cell fate determination and differentiation in diverse neuronal cell lineages where it plays a role in specifying the fate of daughter cells during cell divisions. Involved in sensory neuron production and function. Binds both alone and with mec-3 to the mec-3 promoter to initiate and maintain mec-3 expression which is required for sensory neuron differentiation. In addition, binds both alone and with mec-3 to the promoters of mec-4 and mec-7 which act to regulate sensory neuron function. Involved in determining the identity of the serotonergic NSM neurons and the cholinergic IL2 sensory and URA motor neurons. Promotes expression of the cfi-1 transcription factor in the URA and IL2 neurons which in turn activates normal URA and IL2 gene expression. Required to determine the identity of BDU sensory neurons in concert with transcription factor unc-86, regulating expression of a number of genes, including transcription factors ceh-14 and ahr-1, neuropeptides flp-10, nlp-1 and nlp-15, and tyramine receptor-encoding ser-2. Regulates expression of a number of genes in NSM neurons including bas-1, cat-1, dop-3, mgl-3, nlp-13, scd-2 and ptps-1. In the IL2 neurons, required for expression of cho-1, gcy-19, klp-6, lag-2, unc-5 and unc-17. Promotes expression of pkd-2 in the male-specific CEM head neurons. Required for dauer-specific branching of IL2Q neurons and nictation behavior. Controls both the timing and direction of axon outgrowth in HSN neurons. Plays a role in serotonin production by regulating expression of the tryptophan hydrolase tph-1 which catalyzes serotonin synthesis, in the AIM, NSM, HSN and RIH neurons. Involved in regulation of lin-11 expression in the AIZ interneurons, the major interneurons of the olfactory pathway, and is required for odortaxis behavior. Involved in neurite pruning between AIM neurons during larval development by regulating the expression of transcription factor mbr-1. Required for correct localization of unc-40. The polypeptide is Transcription factor unc-86 (unc-86) (Caenorhabditis elegans).